Consider the following 258-residue polypeptide: Adenylate kinase (258 aa).

52 to 57 (GAGKGT) provides a ligand contact to ATP. The NMP stretch occupies residues 72–101 (ATGDMLRSQVAKKTELGKEAKKIMDQGGLV). AMP contacts are provided by residues T73, R78, 99–101 (GLV), 128–131 (GFPR), and Q135. The segment at 169 to 206 (GRLVHPASGRSYHKVFNPPKQEMKDDITGEPLIQRSDD) is LID. Residues R170 and 179–180 (SY) contribute to the ATP site. AMP contacts are provided by R203 and R214. Q242 serves as a coordination point for ATP.

This sequence belongs to the adenylate kinase family. AK2 subfamily. As to quaternary structure, monomer.

Its subcellular location is the cytoplasm. The protein localises to the cytosol. The protein resides in the mitochondrion intermembrane space. The catalysed reaction is AMP + ATP = 2 ADP. Functionally, catalyzes the reversible transfer of the terminal phosphate group between ATP and AMP. Plays an important role in cellular energy homeostasis and in adenine nucleotide metabolism. Adenylate kinase activity is critical for regulation of the phosphate utilization and the AMP de novo biosynthesis pathways. The sequence is that of Adenylate kinase (adk1) from Aspergillus oryzae (strain ATCC 42149 / RIB 40) (Yellow koji mold).